A 215-amino-acid chain; its full sequence is Probable phosphoglycerate mutase GpmB (215 aa).

Residues 8-15 (RHGETEWN), 21-22 (QG), Arg58, 82-85 (ELDM), and 151-152 (GI) each bind substrate. His9 serves as the catalytic Tele-phosphohistidine intermediate. Glu82 acts as the Proton donor/acceptor in catalysis.

It belongs to the phosphoglycerate mutase family. GpmB subfamily.

The enzyme catalyses (2R)-2-phosphoglycerate = (2R)-3-phosphoglycerate. The protein operates within carbohydrate degradation; glycolysis; pyruvate from D-glyceraldehyde 3-phosphate: step 3/5. The sequence is that of Probable phosphoglycerate mutase GpmB from Proteus mirabilis (strain HI4320).